Consider the following 226-residue polypeptide: Probable GPI-anchored adhesin-like protein PGA28 (226 aa).

The first 26 residues, 1-26 (MKFFAYFAVIALSSASLINLFKRATA), serve as a signal peptide directing secretion. Residues 119–209 (DTEATTGSDT…SQQTSSHAGG (91 aa)) form a disordered region. Positions 131-148 (KAATGATTSAGTGVTKTS) are enriched in low complexity. Residues 149 to 160 (ETGGVSSTANSE) are compositionally biased toward polar residues. Over residues 161–208 (AKSGSVTTSKSGSTSISESKTTSGSSSSGKSSSSTSSASSQQTSSHAG) the composition is skewed to low complexity. Residue S197 is the site of GPI-anchor amidated serine attachment. A propeptide spans 198–226 (ASSQQTSSHAGGASGAFVSLLGLFAALLI) (removed in mature form).

In terms of processing, predicted to be a cleavage substrate for KEX2.

It localises to the cell membrane. Its function is as follows. Putative adhesin which is involved in cell adhesion and virulence. Plays a role in Candida-bacterial interactions and subsequent regulation of filamentation. The protein is Probable GPI-anchored adhesin-like protein PGA28 (PGA28) of Candida albicans (strain SC5314 / ATCC MYA-2876) (Yeast).